We begin with the raw amino-acid sequence, 152 residues long: MEESPIRFADVDINEILKTLPHRYPFLLIDRVKNIRADYSGIGVKNVSIGEPCFQGHFPERPVYPGVLMIEGMAQTAGVIGIKSVEGTEKPRAVYFLTIDKCKFRKPVLPGQTIEYHMRSIGRRKTMWWFHGDAKVDGTIVAEADVGAMLTD.

His57 is an active-site residue.

Belongs to the thioester dehydratase family. FabZ subfamily.

It is found in the cytoplasm. The enzyme catalyses a (3R)-hydroxyacyl-[ACP] = a (2E)-enoyl-[ACP] + H2O. Its function is as follows. Involved in unsaturated fatty acids biosynthesis. Catalyzes the dehydration of short chain beta-hydroxyacyl-ACPs and long chain saturated and unsaturated beta-hydroxyacyl-ACPs. This chain is 3-hydroxyacyl-[acyl-carrier-protein] dehydratase FabZ, found in Bradyrhizobium sp. (strain BTAi1 / ATCC BAA-1182).